The following is a 524-amino-acid chain: Strychnine-10-hydroxylase (524 aa).

The chain crosses the membrane as a helical span at residues Leu6 to Phe26. Cys466 is a heme binding site.

This sequence belongs to the cytochrome P450 family. The cofactor is heme.

The protein localises to the membrane. The enzyme catalyses strychnine + reduced [NADPH--hemoprotein reductase] + O2 = 10-hydroxystrychnine + oxidized [NADPH--hemoprotein reductase] + H2O + H(+). The protein operates within alkaloid biosynthesis. Monooxygenase involved in the biosynthesis of curare monoterpene indole alkaloids (MIAs), natural products such as strychnine, a neurotoxic compound used as a pesticide to control rodents, and its pharmacologically active derivatives, including brucine, used to regulate blood pressure. Curare alkaloids act as animal glycine receptor antagonists. Catalyzes the conversion of strychnine to 10-OH strychnine. The sequence is that of Strychnine-10-hydroxylase from Strychnos nux-vomica (Poison nut).